A 312-amino-acid chain; its full sequence is Pyridoxal kinase (312 aa).

Methionine 1 is modified (N-acetylmethionine). Pyridoxal-binding residues include serine 12 and threonine 47. A pyridoxal 5'-phosphate-binding site is contributed by threonine 47. At serine 59 the chain carries Phosphoserine. Aspartate 113 is a binding site for ATP. Aspartate 113 serves as a coordination point for Na(+). Aspartate 118 lines the Mg(2+) pocket. Position 148 (threonine 148) interacts with Na(+). Residues 150-153 (NQFE) and 186-187 (TS) contribute to the ATP site. Threonine 186 contacts Na(+). Serine 213 is subject to Phosphoserine. ATP-binding positions include 226–228 (VDA) and threonine 233. 234–235 (GD) contacts pyridoxal 5'-phosphate. The active-site Proton acceptor is the aspartate 235. Serine 285 bears the Phosphoserine mark.

It belongs to the pyridoxine kinase family. In terms of assembly, homodimer. Zn(2+) is required as a cofactor. It depends on Mg(2+) as a cofactor.

The protein resides in the cytoplasm. It is found in the cytosol. The catalysed reaction is pyridoxal + ATP = pyridoxal 5'-phosphate + ADP + H(+). It catalyses the reaction pyridoxamine + ATP = pyridoxamine 5'-phosphate + ADP + H(+). It carries out the reaction pyridoxine + ATP = pyridoxine 5'-phosphate + ADP + H(+). It participates in cofactor metabolism; pyridoxal 5'-phosphate salvage; pyridoxal 5'-phosphate from pyridoxal: step 1/1. Its pathway is cofactor metabolism; pyridoxal 5'-phosphate salvage; pyridoxine 5'-phosphate from pyridoxine: step 1/1. It functions in the pathway cofactor metabolism; pyridoxal 5'-phosphate salvage; pyridoxamine 5'-phosphate from pyridoxamine: step 1/1. Activity is increased in the presence of K(+)or Na(+). Functionally, catalyzes the phosphorylation of the dietary vitamin B6 vitamers pyridoxal (PL), pyridoxine (PN) and pyridoxamine (PM) to form pyridoxal 5'-phosphate (PLP), pyridoxine 5'-phosphate (PNP) and pyridoxamine 5'-phosphate (PMP), respectively. PLP is the active form of vitamin B6, and acts as a cofactor for over 140 different enzymatic reactions. This Bos taurus (Bovine) protein is Pyridoxal kinase (PDXK).